Consider the following 256-residue polypeptide: Thiazole synthase (256 aa).

Residue Lys96 is the Schiff-base intermediate with DXP of the active site. 1-deoxy-D-xylulose 5-phosphate contacts are provided by residues Gly157, 184-185 (AG), and 206-207 (NT).

Belongs to the ThiG family. As to quaternary structure, homotetramer. Forms heterodimers with either ThiH or ThiS.

The protein resides in the cytoplasm. The catalysed reaction is [ThiS sulfur-carrier protein]-C-terminal-Gly-aminoethanethioate + 2-iminoacetate + 1-deoxy-D-xylulose 5-phosphate = [ThiS sulfur-carrier protein]-C-terminal Gly-Gly + 2-[(2R,5Z)-2-carboxy-4-methylthiazol-5(2H)-ylidene]ethyl phosphate + 2 H2O + H(+). Its pathway is cofactor biosynthesis; thiamine diphosphate biosynthesis. Functionally, catalyzes the rearrangement of 1-deoxy-D-xylulose 5-phosphate (DXP) to produce the thiazole phosphate moiety of thiamine. Sulfur is provided by the thiocarboxylate moiety of the carrier protein ThiS. In vitro, sulfur can be provided by H(2)S. In Brucella anthropi (strain ATCC 49188 / DSM 6882 / CCUG 24695 / JCM 21032 / LMG 3331 / NBRC 15819 / NCTC 12168 / Alc 37) (Ochrobactrum anthropi), this protein is Thiazole synthase.